Consider the following 34-residue polypeptide: METVLSAPEVFIALVVAAHAAVLALRLSISLYEA.

Residues V4–A24 traverse the membrane as a helical segment.

Belongs to the PsaM family.

The protein resides in the cellular thylakoid membrane. This is Photosystem I reaction center subunit XII from Synechococcus sp. (strain CC9605).